We begin with the raw amino-acid sequence, 212 residues long: Large ribosomal subunit protein uL3 (212 aa).

Positions 134-155 (RNSHGNSLSHRAPGSIGQNQSP) are disordered. Residue Gln153 is modified to N5-methylglutamine.

The protein belongs to the universal ribosomal protein uL3 family. In terms of assembly, part of the 50S ribosomal subunit. Forms a cluster with proteins L14 and L19. In terms of processing, methylated by PrmB.

In terms of biological role, one of the primary rRNA binding proteins, it binds directly near the 3'-end of the 23S rRNA, where it nucleates assembly of the 50S subunit. This Pseudoalteromonas atlantica (strain T6c / ATCC BAA-1087) protein is Large ribosomal subunit protein uL3.